The sequence spans 343 residues: MTEEFDIRQERYRGNDGEREVENKLRPLTFDSFSGQDKVVENLSIFVAAARLRGEALDHTLLHGPPGLGKTTLSNIIANELGVGLKITSGPVLDKPGDLAGLLSSLESNDVLFIDEIHRLSPVVEEYLYSAMEDYRIDIMLDKGPSARSIQINLSPFTLVGATTRSGLLTAPLRARFGINLHLEYYDVHTITGIVERSARILEVSCSHDAAVEIAGRSRGTPRIANALLRRVRDFAQVKGSGAIDKPIACYALEALNIDRYGLDNVDHKLLATIIDKFAGGPVGLSTIATALGEDPGTIEEVYEPFLIKEGFLKRTPRGREVTELAYTHLGRNPRPHRPSLFD.

The tract at residues Met-1–Tyr-186 is large ATPase domain (RuvB-L). ATP-binding positions include Leu-25, Arg-26, Gly-67, Lys-70, Thr-71, Thr-72, Glu-133–Tyr-135, Arg-176, Tyr-186, and Arg-223. Thr-71 serves as a coordination point for Mg(2+). Residues Asp-187 to Asn-257 are small ATPAse domain (RuvB-S). The interval Arg-260 to Asp-343 is head domain (RuvB-H). Arg-315 and Arg-320 together coordinate DNA.

The protein belongs to the RuvB family. In terms of assembly, homohexamer. Forms an RuvA(8)-RuvB(12)-Holliday junction (HJ) complex. HJ DNA is sandwiched between 2 RuvA tetramers; dsDNA enters through RuvA and exits via RuvB. An RuvB hexamer assembles on each DNA strand where it exits the tetramer. Each RuvB hexamer is contacted by two RuvA subunits (via domain III) on 2 adjacent RuvB subunits; this complex drives branch migration. In the full resolvosome a probable DNA-RuvA(4)-RuvB(12)-RuvC(2) complex forms which resolves the HJ.

The protein localises to the cytoplasm. It catalyses the reaction ATP + H2O = ADP + phosphate + H(+). The RuvA-RuvB-RuvC complex processes Holliday junction (HJ) DNA during genetic recombination and DNA repair, while the RuvA-RuvB complex plays an important role in the rescue of blocked DNA replication forks via replication fork reversal (RFR). RuvA specifically binds to HJ cruciform DNA, conferring on it an open structure. The RuvB hexamer acts as an ATP-dependent pump, pulling dsDNA into and through the RuvAB complex. RuvB forms 2 homohexamers on either side of HJ DNA bound by 1 or 2 RuvA tetramers; 4 subunits per hexamer contact DNA at a time. Coordinated motions by a converter formed by DNA-disengaged RuvB subunits stimulates ATP hydrolysis and nucleotide exchange. Immobilization of the converter enables RuvB to convert the ATP-contained energy into a lever motion, pulling 2 nucleotides of DNA out of the RuvA tetramer per ATP hydrolyzed, thus driving DNA branch migration. The RuvB motors rotate together with the DNA substrate, which together with the progressing nucleotide cycle form the mechanistic basis for DNA recombination by continuous HJ branch migration. Branch migration allows RuvC to scan DNA until it finds its consensus sequence, where it cleaves and resolves cruciform DNA. The polypeptide is Holliday junction branch migration complex subunit RuvB (Porphyromonas gingivalis (strain ATCC BAA-308 / W83)).